Here is a 422-residue protein sequence, read N- to C-terminus: Acylglycerol kinase, mitochondrial (422 aa).

The residue at position 6 (K6) is an N6-acetyllysine. The hydrophobic stretch occupies residues 15 to 31 (TTAGLCLLTWGGHWLYG). One can recognise a DAGKc domain in the interval 58–199 (AQVKKATVFL…LDVLQIKGEK (142 aa)). The disordered stretch occupies residues 249–271 (QASISYTGPTERPPNEPEETPVQ).

It belongs to the AGK family. In terms of assembly, component of the TIM22 complex, which core is composed of TIMM22, associated with TIMM10 (TIMM10A and/or TIMM10B), TIMM9, AGK and TIMM29. Interacts with SMIM26. Mg(2+) serves as cofactor. Highly expressed in muscle, heart, kidney and brain.

It is found in the mitochondrion inner membrane. It localises to the mitochondrion intermembrane space. It catalyses the reaction a monoacylglycerol + ATP = a monoacyl-sn-glycero-3-phosphate + ADP + H(+). It carries out the reaction a 1,2-diacyl-sn-glycerol + ATP = a 1,2-diacyl-sn-glycero-3-phosphate + ADP + H(+). The enzyme catalyses an N-acylsphing-4-enine + ATP = an N-acylsphing-4-enine 1-phosphate + ADP + H(+). The catalysed reaction is 1-(9Z-octadecenoyl)-sn-glycerol + ATP = 1-(9Z-octadecenoyl)-sn-glycero-3-phosphate + ADP + H(+). It catalyses the reaction 1,2-di-(9Z-octadecenoyl)-sn-glycerol + ATP = 1,2-di-(9Z-octadecenoyl)-sn-glycero-3-phosphate + ADP + H(+). It carries out the reaction a 1-acyl-sn-glycerol + ATP = a 1-acyl-sn-glycero-3-phosphate + ADP + H(+). The enzyme catalyses 1-hexadecanoyl-sn-glycerol + ATP = 1-hexadecanoyl-sn-glycero-3-phosphate + ADP + H(+). The catalysed reaction is a 2-acylglycerol + ATP = a 2-acyl-sn-glycerol 3-phosphate + ADP + H(+). It catalyses the reaction 2-(5Z,8Z,11Z,14Z-eicosatetraenoyl)-glycerol + ATP = 2-(5Z,8Z,11Z,14Z-eicosatetraenoyl)-sn-glycero-3-phosphate + ADP + H(+). It carries out the reaction 1-(5Z,8Z,11Z,14Z-eicosatetraenoyl)-sn-glycerol + ATP = 1-(5Z,8Z,11Z,14Z-eicosatetraenoyl)-sn-glycero-3-phosphate + ADP + H(+). The enzyme catalyses N-(hexanoyl)sphing-4-enine + ATP = N-hexanoylsphing-4-enine 1-phosphate + ADP + H(+). Its pathway is lipid metabolism; glycerolipid metabolism. Functionally, lipid kinase that can phosphorylate both monoacylglycerol and diacylglycerol to form lysophosphatidic acid (LPA) and phosphatidic acid (PA), respectively. Does not phosphorylate sphingosine. Phosphorylates ceramide. Phosphorylates 1,2-dioleoylglycerol more rapidly than 2,3-dioleoylglycerol. Independently of its lipid kinase activity, acts as a component of the TIM22 complex. The TIM22 complex mediates the import and insertion of multi-pass transmembrane proteins into the mitochondrial inner membrane by forming a twin-pore translocase that uses the membrane potential as the external driving force. In the TIM22 complex, required for the import of a subset of metabolite carriers into mitochondria, such as ANT1/SLC25A4 and SLC25A24, while it is not required for the import of TIMM23. Overexpression increases the formation and secretion of LPA, resulting in transactivation of EGFR and activation of the downstream MAPK signaling pathway, leading to increased cell growth. In Homo sapiens (Human), this protein is Acylglycerol kinase, mitochondrial.